Here is a 373-residue protein sequence, read N- to C-terminus: MSDLTLVLLGAGNSSRFGLDVKKQWLWCGNEPLWLYVTNRFTDMFPFHDVVITAHPKEIPFYKKFCHHTIVKGADTRQQSLLNALEMVKTPYVLVSDIARPCIQKEVVQKIIDNRSKAACIVPYIQPADTVVYKNETIDRNEVKLIQTPQLSSTDILRKALTQGKEFTDESSAIQALGEKVFYILGNRKQHKLTYKEDMKLLNCLQKPSATKRIGNGLDVHAFCEDRKLYLCGIEIPYDKGLAGHSDADVAIHALIDALLGAAGFGDIGELFPDSDETYKDIDSKKLLCETVRLLRACGFVIEHVDLTIVAQNPKIGPFKEKMKESLHDLLQIPYHLINLKATTTEHLGFVGRNEGIAAMATATLHYFDWSEI.

Residues 1 to 213 (MSDLTLVLLG…CLQKPSATKR (213 aa)) form a 2-C-methyl-D-erythritol 4-phosphate cytidylyltransferase region. The tract at residues 213–373 (RIGNGLDVHA…TLHYFDWSEI (161 aa)) is 2-C-methyl-D-erythritol 2,4-cyclodiphosphate synthase. Residues Asp219 and His221 each contribute to the a divalent metal cation site. Residues 219-221 (DVH) and 245-246 (HS) contribute to the 4-CDP-2-C-methyl-D-erythritol 2-phosphate site. His253 provides a ligand contact to a divalent metal cation. Residues 267 to 269 (DIG), 272 to 276 (FPDSD), 343 to 346 (TTTE), Phe350, and Arg353 each bind 4-CDP-2-C-methyl-D-erythritol 2-phosphate.

This sequence in the N-terminal section; belongs to the IspD/TarI cytidylyltransferase family. IspD subfamily. It in the C-terminal section; belongs to the IspF family. A divalent metal cation serves as cofactor.

It catalyses the reaction 2-C-methyl-D-erythritol 4-phosphate + CTP + H(+) = 4-CDP-2-C-methyl-D-erythritol + diphosphate. The catalysed reaction is 4-CDP-2-C-methyl-D-erythritol 2-phosphate = 2-C-methyl-D-erythritol 2,4-cyclic diphosphate + CMP. Its pathway is isoprenoid biosynthesis; isopentenyl diphosphate biosynthesis via DXP pathway; isopentenyl diphosphate from 1-deoxy-D-xylulose 5-phosphate: step 2/6. It participates in isoprenoid biosynthesis; isopentenyl diphosphate biosynthesis via DXP pathway; isopentenyl diphosphate from 1-deoxy-D-xylulose 5-phosphate: step 4/6. Bifunctional enzyme that catalyzes the formation of 4-diphosphocytidyl-2-C-methyl-D-erythritol from CTP and 2-C-methyl-D-erythritol 4-phosphate (MEP) (IspD), and catalyzes the conversion of 4-diphosphocytidyl-2-C-methyl-D-erythritol 2-phosphate (CDP-ME2P) to 2-C-methyl-D-erythritol 2,4-cyclodiphosphate (ME-CPP) with a corresponding release of cytidine 5-monophosphate (CMP) (IspF). The protein is Bifunctional enzyme IspD/IspF of Nitratiruptor sp. (strain SB155-2).